The chain runs to 377 residues: Guanine nucleotide-binding protein subunit beta (377 aa).

WD repeat units follow at residues 63–93 (GHTGKVYSLDWTPERNRIVSASQDGRLIVWN), 105–135 (LPCAWVMTCAFSPNGQSVACGGLDSVCSIFS), 154–185 (GHRGYVSCCQYVPNEDAHLITSSGDQTCILWD), 202–233 (GHTADVLSVSISGSNPNWFISGSCDSTARLWD), 246–276 (GHEGDVNTVKFFPDGYRFGTGSDDGTCRLYD), 292–323 (GENGPVTSIAFSVSGRLLFAGYASNNTCYVWD), and 339–369 (SHRNRISCLGLSADGSALCTGSWDSNLKIWA). 2 consecutive short sequence motifs (DWD box) follow at residues 220-235 (FISGSCDSTARLWDTR) and 263-278 (FGTGSDDGTCRLYDIR).

This sequence belongs to the WD repeat G protein beta family. G proteins are composed of 3 units, alpha, beta and gamma. Interacts with the gamma subunits GG1 and GG2. The dimers GB1-GG1 and GB1-GG2 interact with NDL1, NDL2 and NDL3. Interacts with WNK8. Interacts with XLG2. Interacts with RACK1A, RACK1B and RACK1C. Interacts with ZAR1 (via GBeta-binding domain). As to expression, expressed in seedlings (especially at the hypocotyl/root junction), roots, leaves (restricted to veins and guard cells), and flowers. Also present in hydathods. Expressed in guard cells, mesophyll tissue of cotyledons, trichomes and whole siliques, but not in seeds.

It localises to the cell membrane. It is found in the cytoplasm. The protein localises to the nucleus. Guanine nucleotide-binding proteins (G proteins) are involved as a modulator or transducer in various transmembrane signaling systems. The beta and gamma chains are required for the GTPase activity, for replacement of GDP by GTP, and for G protein-effector interaction. The heterotrimeric G-protein controls defense responses to necrotrophic and vascular fungi probably by modulating cell wall-related genes expression (e.g. lower xylose content in cell walls); involved in resistance to fungal pathogens such as Alternaria brassicicola and Fusarium oxysporum. Modulates root architecture (e.g. lateral root formation). Acts with XGL3 in the positive regulation of root waving and root skewing. Involved in the asymmetric division of zygote and specification of apical and basal cell lineages. This Arabidopsis thaliana (Mouse-ear cress) protein is Guanine nucleotide-binding protein subunit beta (GB1).